Reading from the N-terminus, the 445-residue chain is FAS-associated factor 2 (445 aa).

Ala-2 carries the N-acetylalanine modification. Residues 12–48 enclose the UBA domain; that stretch reads EQTEKLLQFQDLTGIESMEQCRLALEQHNWNMEAAVQ. Lys-167 bears the N6-acetyllysine mark. A coiled-coil region spans residues 275 to 350; sequence SERLEREERN…EEKERKLECL (76 aa). The interval 300–361 is disordered; the sequence is SLRADQEKER…PEPSPDDPES (62 aa). Residues 303–348 show a composition bias toward basic and acidic residues; that stretch reads ADQEKERKKREEKERKRRKEEEVQQQKLAEERRRQNLQEEKERKLE. The UBX domain maps to 357 to 439; sequence DDPESVKIIF…GLSHTEVLFV (83 aa).

Identified in a complex that contains SEL1L, OS9, FAF2/UBXD8, UBE2J1/UBC6E and AUP1. Interacts with YOD1. Interacts (via N-terminus) with UBQLN2 (via C-terminus). Interacts with PNPLA2. Interacts with ZFAND2B; probably through VCP. Interacts with LMBR1L and UBAC2.

The protein resides in the cytoplasm. The protein localises to the lipid droplet. It is found in the endoplasmic reticulum. Plays an important role in endoplasmic reticulum-associated degradation (ERAD) that mediates ubiquitin-dependent degradation of misfolded endoplasmic reticulum proteins. By controlling the steady-state expression of the IGF1R receptor, indirectly regulates the insulin-like growth factor receptor signaling pathway. Involved in inhibition of lipid droplet degradation by binding to phospholipase PNPL2 and inhibiting its activity by promoting dissociation of PNPL2 from its endogenous activator, ABHD5 which inhibits the rate of triacylglycerol hydrolysis. Involved in stress granule disassembly: associates with ubiquitinated G3BP1 in response to heat shock, thereby promoting interaction between ubiquitinated G3BP1 and VCP, followed by G3BP1 extraction from stress granules and stress granule disassembly. In Mus musculus (Mouse), this protein is FAS-associated factor 2 (Faf2).